A 225-amino-acid polypeptide reads, in one-letter code: Ribonuclease T (225 aa).

Positions 1–21 (MSEDHFDDEHEGHGGGGGSRH) are disordered. Positions 33 to 207 (VVVDVETGGF…YDTEKTAELF (175 aa)) constitute an Exonuclease domain. Mg(2+)-binding residues include aspartate 36, glutamate 38, histidine 194, and aspartate 199. Histidine 194 functions as the Proton donor/acceptor in the catalytic mechanism.

It belongs to the RNase T family. As to quaternary structure, homodimer. It depends on Mg(2+) as a cofactor.

Functionally, trims short 3' overhangs of a variety of RNA species, leaving a one or two nucleotide 3' overhang. Responsible for the end-turnover of tRNA: specifically removes the terminal AMP residue from uncharged tRNA (tRNA-C-C-A). Also appears to be involved in tRNA biosynthesis. In Pseudomonas syringae pv. syringae (strain B728a), this protein is Ribonuclease T.